The following is a 355-amino-acid chain: Sesquiterpene synthase MAJ_08936 (355 aa).

Mg(2+)-binding residues include aspartate 91 and aspartate 96. The DDXXXD motif motif lies at 91–96 (DDLFVD). Arginine 184 is a binding site for substrate. Residues asparagine 230, serine 234, and glutamate 238 each coordinate Mg(2+).

The protein belongs to the terpene synthase family. Mg(2+) is required as a cofactor.

It catalyses the reaction (2E,6E)-farnesyl diphosphate + H2O = (+)-corvol ether B + diphosphate. It carries out the reaction (2E,6E)-farnesyl diphosphate + H2O = (+)-corvol ether A + diphosphate. In terms of biological role, terpene synthase that catalyzes the conversion of (2E,6E)-farnesyl diphosphate (FPP) into sesquiterpenes which are important for fungi-environment interactions. Produces a mixture consisting of 8 sesquiterpenes including corvol ethers A and B, as well as traces of epizonarene, gamma-cadinene, delta-cadinene, alpha-cadinene, alpha-cadinol, and an unidentified sesquiterpene. The major product is corvol ether A. The protein is Sesquiterpene synthase MAJ_08936 of Metarhizium majus (strain ARSEF 297).